We begin with the raw amino-acid sequence, 259 residues long: Deoxyribose-phosphate aldolase (259 aa).

The active-site Proton donor/acceptor is aspartate 102. Residue lysine 167 is the Schiff-base intermediate with acetaldehyde of the active site. Residue lysine 201 is the Proton donor/acceptor of the active site.

The protein belongs to the DeoC/FbaB aldolase family. DeoC type 2 subfamily.

Its subcellular location is the cytoplasm. The catalysed reaction is 2-deoxy-D-ribose 5-phosphate = D-glyceraldehyde 3-phosphate + acetaldehyde. It functions in the pathway carbohydrate degradation; 2-deoxy-D-ribose 1-phosphate degradation; D-glyceraldehyde 3-phosphate and acetaldehyde from 2-deoxy-alpha-D-ribose 1-phosphate: step 2/2. Its function is as follows. Catalyzes a reversible aldol reaction between acetaldehyde and D-glyceraldehyde 3-phosphate to generate 2-deoxy-D-ribose 5-phosphate. This chain is Deoxyribose-phosphate aldolase, found in Edwardsiella ictaluri (strain 93-146).